A 445-amino-acid chain; its full sequence is Phosphoglucosamine mutase (445 aa).

Serine 99 (phosphoserine intermediate) is an active-site residue. Residues serine 99, aspartate 242, aspartate 244, and aspartate 246 each coordinate Mg(2+). Serine 99 is modified (phosphoserine).

It belongs to the phosphohexose mutase family. Requires Mg(2+) as cofactor. Post-translationally, activated by phosphorylation.

It carries out the reaction alpha-D-glucosamine 1-phosphate = D-glucosamine 6-phosphate. Catalyzes the conversion of glucosamine-6-phosphate to glucosamine-1-phosphate. The polypeptide is Phosphoglucosamine mutase (Helicobacter pylori (strain G27)).